Here is a 269-residue protein sequence, read N- to C-terminus: Putative hydro-lyase RL2444 (269 aa).

This sequence belongs to the D-glutamate cyclase family.

The protein is Putative hydro-lyase RL2444 of Rhizobium johnstonii (strain DSM 114642 / LMG 32736 / 3841) (Rhizobium leguminosarum bv. viciae).